The chain runs to 282 residues: WRKY transcription factor 71 (282 aa).

Residues 63–121 form a disordered region; it reads LTSNSPVVSSSSNEGEPKENTNDKSDQMEDNEGDLHGVGESSKQLTKQGKKKGEKKERE. Low complexity predominate over residues 65 to 75; the sequence is SNSPVVSSSSN. A compositionally biased stretch (basic and acidic residues) spans 77-99; that stretch reads GEPKENTNDKSDQMEDNEGDLHG. Residues 130–195 constitute a DNA-binding region (WRKY); it reads SEIDHLEDGY…YEGKHNHPIP (66 aa).

This sequence belongs to the WRKY group II-c family.

It is found in the nucleus. Transcription factor. Interacts specifically with the W box (5'-(T)TGAC[CT]-3'), a frequently occurring elicitor-responsive cis-acting element. This chain is WRKY transcription factor 71 (WRKY71), found in Arabidopsis thaliana (Mouse-ear cress).